The chain runs to 406 residues: Phosphorylase b kinase gamma catalytic chain, liver/testis isoform (406 aa).

The Protein kinase domain occupies 24-291 (YDPKDVIGRG…AEQALQHPFF (268 aa)). ATP contacts are provided by residues 30–38 (IGRGVSSVV) and K53. D153 (proton acceptor) is an active-site residue. The tract at residues 306 to 330 (QRFRVAVWTVLAAGRVALSAHRIRP) is calmodulin-binding (domain-N). The calmodulin-binding (domain-C) stretch occupies residues 346–370 (VRRLIDNCAFRLYGHWVKKGEQQNR).

This sequence belongs to the protein kinase superfamily. CAMK Ser/Thr protein kinase family. As to quaternary structure, hexadecamer of 4 heterotetramers, each composed of alpha, beta, gamma, and delta subunits. Alpha (PHKA1 or PHKA2) and beta (PHKB) are regulatory subunits, gamma (PHKG1 or PHKG2) is the catalytic subunit, and delta is calmodulin.

It carries out the reaction 2 ATP + phosphorylase b = 2 ADP + phosphorylase a.. Its function is as follows. Catalytic subunit of the phosphorylase b kinase (PHK), which mediates the neural and hormonal regulation of glycogen breakdown (glycogenolysis) by phosphorylating and thereby activating glycogen phosphorylase. May regulate glycogeneolysis in the testis. In vitro, phosphorylates PYGM. The chain is Phosphorylase b kinase gamma catalytic chain, liver/testis isoform (PHKG2) from Bos taurus (Bovine).